The following is a 268-amino-acid chain: MRLPVNRSLFIPFIVAGDPSADLTVDLALALQDAGADVLELGVPYSDPLADGPTIQRAAARALAGQMTLPKAIQLVADMRKKGVKIPIIIFTYYNPVLQLGEESFFALAQENGADGVLIPDLPFEESGPLLELSERFGLPLISLVAPTSKQRIEQIASAAQGFLYCVSSLGVTGVRETLPESLGHFLGEVKRHSRVPVVVGFGISTPEQVAMLKDACDGVVVGSALVQKIEQLLERLQTLEEKNAAIAEFASYARSLAAPLREPCSSR.

Catalysis depends on proton acceptor residues Glu40 and Asp51.

This sequence belongs to the TrpA family. As to quaternary structure, tetramer of two alpha and two beta chains.

It carries out the reaction (1S,2R)-1-C-(indol-3-yl)glycerol 3-phosphate + L-serine = D-glyceraldehyde 3-phosphate + L-tryptophan + H2O. It functions in the pathway amino-acid biosynthesis; L-tryptophan biosynthesis; L-tryptophan from chorismate: step 5/5. The alpha subunit is responsible for the aldol cleavage of indoleglycerol phosphate to indole and glyceraldehyde 3-phosphate. In Geobacillus thermodenitrificans (strain NG80-2), this protein is Tryptophan synthase alpha chain.